A 333-amino-acid polypeptide reads, in one-letter code: CMP-N-acetylneuraminate-beta-galactosamide-alpha-2,3-sialyltransferase 4 (333 aa).

At Met-1–Lys-8 the chain is on the cytoplasmic side. Residues Leu-9–Ser-26 traverse the membrane as a helical; Signal-anchor for type II membrane protein segment. Residues Arg-27–Phe-333 lie on the Lumenal side of the membrane. Residues Asn-61, Asn-131, Asn-310, and Asn-329 are each glycosylated (N-linked (GlcNAc...) asparagine). An intrachain disulfide couples Cys-120 to Cys-273.

Belongs to the glycosyltransferase 29 family.

The protein localises to the golgi apparatus. It is found in the golgi stack membrane. It carries out the reaction a beta-D-galactosyl-(1-&gt;3)-N-acetyl-beta-D-galactosaminyl derivative + CMP-N-acetyl-beta-neuraminate = an N-acetyl-alpha-neuraminyl-(2-&gt;3)-beta-D-galactosyl-(1-&gt;3)-N-acetyl-beta-D-galactosaminyl derivative + CMP + H(+). The catalysed reaction is a beta-D-galactosyl-(1-&gt;3)-N-acetyl-alpha-D-galactosaminyl derivative + CMP-N-acetyl-beta-neuraminate = an N-acetyl-alpha-neuraminyl-(2-&gt;3)-beta-D-galactosyl-(1-&gt;3)-N-acetyl-alpha-D-galactosaminyl derivative + CMP + H(+). It catalyses the reaction a beta-D-galactosyl-(1-&gt;4)-N-acetyl-beta-D-glucosaminyl derivative + CMP-N-acetyl-beta-neuraminate = an N-acetyl-alpha-neuraminyl-(2-&gt;3)-beta-D-galactosyl-(1-&gt;4)-N-acetyl-beta-D-glucosaminyl derivative + CMP + H(+). The enzyme catalyses a ganglioside GM1 (d18:1(4E)) + CMP-N-acetyl-beta-neuraminate = a ganglioside GD1a (d18:1(4E)) + CMP + H(+). It carries out the reaction a ganglioside GA1 (d18:1(4E)) + CMP-N-acetyl-beta-neuraminate = a ganglioside GM1b (d18:1(4E)) + CMP + H(+). The catalysed reaction is a ganglioside GT1c (d18:1(4E)) + CMP-N-acetyl-beta-neuraminate = a ganglioside GQ1c (d18:1(4E)) + CMP + H(+). It catalyses the reaction a neolactoside nLc4Cer + CMP-N-acetyl-beta-neuraminate = a neolactoside IV(3)-alpha-NeuAc-nLc4Cer + CMP + H(+). The enzyme catalyses a neolactoside nLc4Cer(d18:1(4E)) + CMP-N-acetyl-beta-neuraminate = a neolactoside IV(3)-alpha-NeuAc-nLc4Cer(d18:1(4E)) + CMP + H(+). It participates in protein modification; protein glycosylation. It functions in the pathway glycolipid biosynthesis. Its function is as follows. A beta-galactoside alpha2-3 sialyltransferase involved in terminal sialylation of glycoproteins and glycolipids. Catalyzes the transfer of sialic acid (N-acetyl-neuraminic acid; Neu5Ac) from the nucleotide sugar donor CMP-Neu5Ac onto acceptor Galbeta-(1-&gt;3)-GalNAc- and Galbeta-(1-&gt;4)-GlcNAc-terminated glycoconjugates through an alpha2-3 linkage. Plays a major role in hemostasis. Responsible for sialylation of plasma VWF/von Willebrand factor, preventing its recognition by asialoglycoprotein receptors (ASGPR) and subsequent clearance. Regulates ASGPR-mediated clearance of platelets. Participates in the biosynthesis of the sialyl Lewis X epitopes, both on O- and N-glycans, which are recognized by SELE/E-selectin, SELP/P-selectin and SELL/L-selectin. Essential for selectin-mediated rolling and adhesion of leukocytes during extravasation. Contributes to adhesion and transendothelial migration of neutrophils likely through terminal sialylation of CXCR2. In glycosphingolipid biosynthesis, sialylates GM1 and GA1 gangliosides to form GD1a and GM1b, respectively. Metabolizes brain c-series ganglioside GT1c forming GQ1c. Synthesizes ganglioside LM1 (IV3Neu5Ac-nLc4Cer), a major structural component of peripheral nerve myelin. The sequence is that of CMP-N-acetylneuraminate-beta-galactosamide-alpha-2,3-sialyltransferase 4 (St3gal4) from Rattus norvegicus (Rat).